A 171-amino-acid polypeptide reads, in one-letter code: Putative charged multivesicular body protein 4B-like protein CHMP4BP1 (171 aa).

The segment covering 1-17 (MLSKKQEFLEKKIEQRH) has biased composition (basic and acidic residues). Disordered regions lie at residues 1-24 (MLSK…NKPA) and 132-171 (EQEE…KTTT).

It belongs to the SNF7 family.

In Homo sapiens (Human), this protein is Putative charged multivesicular body protein 4B-like protein CHMP4BP1 (CHMP4BP1).